The following is a 299-amino-acid chain: tRNA pseudouridine synthase B (299 aa).

Residue Asp49 is the Nucleophile of the active site. The region spanning 241 to 299 (MPRVTVSGRAAARVLHGVAPAVRVEHPDGTTVAVVAANGALLALAEADGGGLRLRKVFG) is the PUA domain.

Belongs to the pseudouridine synthase TruB family. Type 1 subfamily.

It catalyses the reaction uridine(55) in tRNA = pseudouridine(55) in tRNA. In terms of biological role, responsible for synthesis of pseudouridine from uracil-55 in the psi GC loop of transfer RNAs. This Symbiobacterium thermophilum (strain DSM 24528 / JCM 14929 / IAM 14863 / T) protein is tRNA pseudouridine synthase B.